Here is a 192-residue protein sequence, read N- to C-terminus: Casparian strip membrane protein 1 (192 aa).

The Cytoplasmic segment spans residues Met1–Gly30. Residues Leu31–Ala51 traverse the membrane as a helical segment. The Extracellular portion of the chain corresponds to Thr52 to Gln80. A helical membrane pass occupies residues Phe81–Val101. The Cytoplasmic portion of the chain corresponds to Val102–Arg113. The helical transmembrane segment at Leu114–Ala134 threads the bilayer. Topologically, residues Ala135–Gly166 are extracellular. The chain crosses the membrane as a helical span at residues Ala167–Leu187. Residues Ala188 to His192 lie on the Cytoplasmic side of the membrane.

This sequence belongs to the Casparian strip membrane proteins (CASP) family. Homodimer and heterodimers.

The protein localises to the cell membrane. In terms of biological role, regulates membrane-cell wall junctions and localized cell wall deposition. Required for establishment of the Casparian strip membrane domain (CSD) and the subsequent formation of Casparian strips, a cell wall modification of the root endodermis that determines an apoplastic barrier between the intraorganismal apoplasm and the extraorganismal apoplasm and prevents lateral diffusion. In Vigna unguiculata (Cowpea), this protein is Casparian strip membrane protein 1.